We begin with the raw amino-acid sequence, 196 residues long: Ribonuclease HII (196 aa).

Positions 9 to 196 constitute an RNase H type-2 domain; that stretch reads NLIAGVDEVG…APVKRALNLV (188 aa). A divalent metal cation-binding residues include Asp-15, Glu-16, and Asp-107.

This sequence belongs to the RNase HII family. It depends on Mn(2+) as a cofactor. Requires Mg(2+) as cofactor.

It localises to the cytoplasm. It carries out the reaction Endonucleolytic cleavage to 5'-phosphomonoester.. Its function is as follows. Endonuclease that specifically degrades the RNA of RNA-DNA hybrids. The sequence is that of Ribonuclease HII from Proteus mirabilis (strain HI4320).